The sequence spans 184 residues: Spiro-conjugate synthase (184 aa).

C57 and C184 form a disulfide bridge. Residue Q115 coordinates (1S,3R,6R,8R,9R,11R,14S,15S,19R,20R)-8-ethyl-9,15-dihydroxy-3,4,6,20-tetramethyl-21,23-dioxo-24-azapentacyclo[20.2.1.0(1,6).0(11,20).0(14,19)]pentacosa-4,12,22(25)-trien-25-olate.

As to quaternary structure, homodimer.

It carries out the reaction 4-[(1R,2R,4aS,5S,8aR)-2-[(2R,3R,5E,7E)-3-ethyl-2-hydroxy-5,7-dimethylnona-5,7-dien-1-yl]-5-hydroxy-1-methyl-1,2,4a,5,6,7,8,8a-octahydronaphthalene-1-carbonyl]-2-methylidene-5-oxo-2,5-dihydro-1H-pyrrol-3-olate = (1S,3R,6R,8R,9R,11R,14S,15S,19R,20R)-8-ethyl-9,15-dihydroxy-3,4,6,20-tetramethyl-21,23-dioxo-24-azapentacyclo[20.2.1.0(1,6).0(11,20).0(14,19)]pentacosa-4,12,22(25)-trien-25-olate. It participates in antibiotic biosynthesis. Involved in the biosynthesis of the spirotetramate antibiotics pyrroindomycins. Catalyzes the intramolecular cyclization forming the spiro-conjugate moiety in pyrroindomycins, via an exo-selective [4+2] cycloaddition reaction. This chain is Spiro-conjugate synthase, found in Streptomyces rugosporus.